A 221-amino-acid chain; its full sequence is Ependymin-1 (221 aa).

The N-terminal stretch at 1 to 21 (MQAFAVAALSIWLCLGATTLA) is a signal peptide. Asn33, Asn73, and Asn97 each carry an N-linked (GlcNAc...) asparagine glycan.

Belongs to the ependymin family. Binds calcium through the terminal sialic acids. In terms of tissue distribution, EPDs are synthesized in the meninx and secreted in the cerebrospinal fluid.

It is found in the secreted. In terms of biological role, may play a role in neural plasticity. May be involved during axon regeneration. The protein is Ependymin-1 (epd1) of Oncorhynchus mykiss (Rainbow trout).